A 502-amino-acid polypeptide reads, in one-letter code: Lysine--tRNA ligase (502 aa).

Mg(2+) contacts are provided by Glu398 and Glu405.

Belongs to the class-II aminoacyl-tRNA synthetase family. In terms of assembly, homodimer. The cofactor is Mg(2+).

Its subcellular location is the cytoplasm. It catalyses the reaction tRNA(Lys) + L-lysine + ATP = L-lysyl-tRNA(Lys) + AMP + diphosphate. In Thermosipho africanus (strain TCF52B), this protein is Lysine--tRNA ligase.